Consider the following 209-residue polypeptide: GTP-binding protein RHO1 (209 aa).

Ser-2 bears the N-acetylserine mark. Residue Gly-17 to Thr-24 participates in GTP binding. Residues Tyr-39 to Tyr-47 carry the Effector region motif. GTP contacts are provided by residues Asp-64 to Gln-68 and Cys-122 to Asp-125. The interval Lys-187–Leu-209 is disordered. Positions Thr-190–Leu-209 are enriched in basic residues. Cys-206 bears the Cysteine methyl ester mark. A lipid anchor (S-geranylgeranyl cysteine) is attached at Cys-206. Residues Val-207–Leu-209 constitute a propeptide, removed in mature form.

This sequence belongs to the small GTPase superfamily. Rho family. As to quaternary structure, interacts with BEM4; the interaction is direct. Interacts with SEC3; the interaction is direct. Interacts with the GAP BAG7. Interacts with the GAP LRG1. Interacts with the GAP SAC7. Interacts with the GAP RDI1. Interacts with the 1,3-beta-glucan synthase component FKS1. Interacts with the protein kinase PKC1. Interacts with the G protein beta subunit STE4. Interacts with SKN7. Interacts with TUS1. Interacts with BNI1.

It is found in the cell membrane. The protein localises to the endosome membrane. It localises to the peroxisome membrane. It catalyses the reaction GTP + H2O = GDP + phosphate + H(+). With respect to regulation, alternates between an inactive form bound to GDP and an active form bound to GTP. Activated by the guanine nucleotide-exchange factors (GEFs) ROM1, ROM2 and TUS1, and inactivated by GTPase-activating proteins (GAPs) BAG7, BEM2, LRG1, and SAC7, and the Rho GDP-dissociation inhibitor RDI1. The different GAPs regulate RHO1 in a target-specific manner. Functionally, acts as a central regulator in the cell wall integrity signaling pathway, which is regulated by the cell cycle and in response to various types of cell wall stress. Integrates signals from different cell surface sensors, and activates a set of effectors, regulating processes including beta-glucan synthesis at the site of wall remodeling, gene expression related to cell wall biogenesis, organization of the actin cytoskeleton, and protein- and secretory vesicle-targeting to the growth site. Activates the protein kinase C (PKC1) MAP kinase cascade, the beta-1,3-glucan synthase (FKS1), the formin BNI1, the exocyst component SEC3 and the transcription factor SKN7. The sequence is that of GTP-binding protein RHO1 (RHO1) from Saccharomyces cerevisiae (strain ATCC 204508 / S288c) (Baker's yeast).